We begin with the raw amino-acid sequence, 130 residues long: Small ribosomal subunit protein uS11c (130 aa).

This sequence belongs to the universal ribosomal protein uS11 family. In terms of assembly, part of the 30S ribosomal subunit.

It is found in the plastid. The protein resides in the chloroplast. This Chara vulgaris (Common stonewort) protein is Small ribosomal subunit protein uS11c.